The primary structure comprises 354 residues: Methionine import ATP-binding protein MetN (354 aa).

An ABC transporter domain is found at 8–250; it reads LDHIDITFRQ…PKEALTQKFI (243 aa). 42–49 lines the ATP pocket; sequence GYSGAGKS.

It belongs to the ABC transporter superfamily. Methionine importer (TC 3.A.1.24) family. As to quaternary structure, the complex is composed of two ATP-binding proteins (MetN), two transmembrane proteins (MetI) and a solute-binding protein (MetQ).

It is found in the cell membrane. The catalysed reaction is L-methionine(out) + ATP + H2O = L-methionine(in) + ADP + phosphate + H(+). It catalyses the reaction D-methionine(out) + ATP + H2O = D-methionine(in) + ADP + phosphate + H(+). Its function is as follows. Part of the ABC transporter complex MetNIQ involved in methionine import. Responsible for energy coupling to the transport system. This Streptococcus pyogenes serotype M18 (strain MGAS8232) protein is Methionine import ATP-binding protein MetN.